The chain runs to 198 residues: MFLVVGLGNPGIEYQFTPHNAGFLAVDAIAAEHNAVVSNRRCQALTGKIQLGGREVILAKPETYMNLSGVAVSALVRELNADPVRDLLVLYDELDLPIGSIRVRERGSPASHNGARSICSALGTADWPRVRIGVGPSGEDDLFRKGKNYLLTPMRKADLATLDGALERTARAVETVVTRGIGVAMNEFNRRENNGPAA.

Tyrosine 14 is a binding site for tRNA. Residue histidine 19 is the Proton acceptor of the active site. Residues tyrosine 64, asparagine 66, and asparagine 113 each coordinate tRNA.

Belongs to the PTH family. As to quaternary structure, monomer.

Its subcellular location is the cytoplasm. It catalyses the reaction an N-acyl-L-alpha-aminoacyl-tRNA + H2O = an N-acyl-L-amino acid + a tRNA + H(+). Functionally, hydrolyzes ribosome-free peptidyl-tRNAs (with 1 or more amino acids incorporated), which drop off the ribosome during protein synthesis, or as a result of ribosome stalling. In terms of biological role, catalyzes the release of premature peptidyl moieties from peptidyl-tRNA molecules trapped in stalled 50S ribosomal subunits, and thus maintains levels of free tRNAs and 50S ribosomes. This is Peptidyl-tRNA hydrolase from Acidobacterium capsulatum (strain ATCC 51196 / DSM 11244 / BCRC 80197 / JCM 7670 / NBRC 15755 / NCIMB 13165 / 161).